The chain runs to 1679 residues: Protein MLP2 (1679 aa).

4 coiled-coil regions span residues 32 to 176 (AKFE…KYDT), 233 to 466 (YNKF…RQVK), 516 to 1064 (FSNV…EREL), and 1099 to 1491 (KLVS…ENAG). 3 short sequence motifs (bipartite nuclear localization signal) span residues 417 to 433 (KRSTELLETVSLTKRKQ), 639 to 655 (RKELLIYKKSQCKKKTT), and 1433 to 1449 (KKEWLKEYEDETLRRIK). 2 disordered regions span residues 1495–1521 (FLDNKGSGEDAEEELWNSPSKGNSERP) and 1632–1679 (DLTN…ASNE). Composition is skewed to polar residues over residues 1511–1520 (NSPSKGNSER) and 1646–1661 (IGSTSKRPIESGTSSD). The residue at position 1512 (Ser1512) is a Phosphoserine. Positions 1662–1671 (PDTKKVKESP) are enriched in basic and acidic residues. At Ser1670 the chain carries Phosphoserine.

Component of the nuclear complex (NPC). NPC constitutes the exclusive means of nucleocytoplasmic transport. NPCs allow the passive diffusion of ions and small molecules and the active, nuclear transport receptor-mediated bidirectional transport of macromolecules such as proteins, RNAs, ribonucleoparticles (RNPs), and ribosomal subunits across the nuclear envelope. Due to its 8-fold rotational symmetry, all subunits are present with 8 copies or multiples thereof. Interacts with NUP60 and NIC96, which tether it to the nuclear pore complex. Component of the spindle pole body core in which it interacts directly with SPC110, SPC42 and SPC29. Also interacts with YKU70 (HDF1) and MLP1.

The protein resides in the nucleus. It is found in the cytoplasm. The protein localises to the cytoskeleton. It localises to the microtubule organizing center. Its subcellular location is the spindle pole body. The protein resides in the nuclear pore complex. Functionally, together with the closely related MLP1, involved in the structural and functional organization of perinuclear chromatin. MLP1/MLP2 associate with the nuclear pore complex and form filamentous structures along the nuclear periphery. Has a role in the localization of Esc1 to nucleolar regions. Together with MLP1, mediates tethering of the some telomeres to the nuclear periphery, probably mediated by YKU70/YKU80 (HDF1/HDF2) heterodimer and show perinuclear location dependent silencing. MLP1 and MLP2 are involved in telomere length regulation but not silencing or telomere anchoring. Plays a role in the incorporation of components into the spindle pole body. Involved in double-strand break repair, probably also mediated by the YKU70/YKU80 (HDF1/HDF2) heterodimer. This chain is Protein MLP2 (MLP2), found in Saccharomyces cerevisiae (strain ATCC 204508 / S288c) (Baker's yeast).